Consider the following 78-residue polypeptide: Large ribosomal subunit protein uL24 (78 aa).

It belongs to the universal ribosomal protein uL24 family. Part of the 50S ribosomal subunit.

Functionally, one of two assembly initiator proteins, it binds directly to the 5'-end of the 23S rRNA, where it nucleates assembly of the 50S subunit. One of the proteins that surrounds the polypeptide exit tunnel on the outside of the subunit. The sequence is that of Large ribosomal subunit protein uL24 from Campylobacter curvus (strain 525.92).